Reading from the N-terminus, the 121-residue chain is Acid shock protein (121 aa).

The N-terminal stretch at 1–21 (MKKVLALMVAATLGLSSVAFA) is a signal peptide. Residues 22 to 63 (ADTTATATPAATSTTATVAAQTKATQHQKHKVTKKTTEQKAQ) constitute a propeptide that is removed on maturation. The segment at 40–121 (AAQTKATQHQ…AKKPVAAPAA (82 aa)) is disordered. Residues 84–93 (AAKKHVKKAS) are compositionally biased toward basic residues. Residues 94–103 (VQKAPVQKAQ) show a composition bias toward low complexity. The segment covering 104 to 113 (AAKKHHKTAK) has biased composition (basic residues).

Belongs to the Asr family. Proteolytic processing gives rise to the active protein.

It localises to the periplasm. Its function is as follows. Required for growth and/or survival at acidic conditions. The protein is Acid shock protein of Yersinia pestis bv. Antiqua (strain Antiqua).